The primary structure comprises 133 residues: Salivary cystatin-L (133 aa).

An N-terminal signal peptide occupies residues 1–19; the sequence is MTSSFALVLLLGGVAVCVA. The Cystatin domain maps to 30-117; the sequence is ANHQANPEFL…HRTCTTVVFE (88 aa). 2 disulfide bridges follow: cysteine 89/cysteine 100 and cysteine 111/cysteine 130.

It belongs to the cystatin family. Monomer. Can form homodimers in vitro, but probably not in vivo. Homodimers are predicted to be inactive; dimerization disrupts the interaction with target proteases.

The protein resides in the secreted. Inhibitor of cysteine proteinases. Inhibits host immune responses via its inhibition of host cathepsins. Contributes to the suppression of the host's immune response to tick salivary proteins and is important for successful feeding on hosts. Inhibits differentiation of host dendritic cells. Inhibits proliferation of host T-cells in response to antigen stimulus. Down-regulates TLR2-mediated host responses to infection by B.burgdorferi and the production of the chemokine CCL3 by host dendritic cells. Down-regulates host responses to infection by B.burgdorferi and the production of IFNB1 by host dendritic cells. Down-regulates IL1B production by host mast cells, and this then leads to impaired activation of IL1R1, resulting in decreased IL9 production. Inhibits host inflammatory reactions and recruitment of host neutrophils. Inhibits papain and cathepsin L (CTSL) (in vitro). Inhibits cathepsin S (CTSS) (in vitro). Inhibits CTSV and CTSC, but to a lesser degree (in vitro). The chain is Salivary cystatin-L from Ixodes scapularis (Black-legged tick).